The chain runs to 906 residues: Catenin alpha-1 (906 aa).

Threonine 2 is subject to N-acetylthreonine. The involved in homodimerization stretch occupies residues 2 to 228; sequence TAVHAGNINF…PILYTASQAC (227 aa). Lysine 57 is covalently cross-linked (Glycyl lysine isopeptide (Lys-Gly) (interchain with G-Cter in SUMO2)). An interaction with JUP and CTNNB1 region spans residues 97–148; that stretch reads VRKQGDLMKSAAGEFADDPCSSVKRGNMVRAARALLSAVTRLLILADMADVY. Phosphoserine occurs at positions 264, 295, and 297. An interaction with alpha-actinin region spans residues 325 to 394; that stretch reads TRDDRRERIV…AVMDHVSDSF (70 aa). Phosphothreonine is present on threonine 634. Position 641 is a phosphoserine (serine 641). A Phosphothreonine modification is found at threonine 645. Residues serine 652 and serine 655 each carry the phosphoserine modification. Threonine 658 is subject to Phosphothreonine. Residue lysine 797 forms a Glycyl lysine isopeptide (Lys-Gly) (interchain with G-Cter in SUMO2) linkage. Position 851 is a phosphoserine (serine 851). Basic and acidic residues predominate over residues 864-880; sequence PEKKPLVKREKQDETQT. Residues 864-894 are disordered; the sequence is PEKKPLVKREKQDETQTKIKRASQKKHVNPV. Residues 881–891 show a composition bias toward basic residues; the sequence is KIKRASQKKHV.

The protein belongs to the vinculin/alpha-catenin family. As to quaternary structure, monomer and homodimer; the monomer preferentially binds to CTNNB1 and the homodimer to actin. Component of an cadherin:catenin adhesion complex composed of at least of CDH26, beta-catenin/CTNNB1, alpha-catenin/CTNNA1 and p120 catenin/CTNND1. Possible component of an E-cadherin/ catenin adhesion complex together with E-cadherin/CDH1 and beta-catenin/CTNNB1 or gamma-catenin/JUP; the complex is located to adherens junctions. The stable association of CTNNA1 is controversial as CTNNA1 was shown not to bind to F-actin when assembled in the complex. Alternatively, the CTNNA1-containing complex may be linked to F-actin by other proteins such as LIMA1. Binds AFDN and F-actin. Interacts with LIMA1. Interacts with ARHGAP21. Interacts with AJUBA. Interacts with vinculin/VCL. Interacts with TJP2/ZO2 (via N-terminus). Interacts with TJP1/ZO1 (via N-terminus). Sumoylated. Post-translationally, phosphorylation seems to contribute to the strength of cell-cell adhesion rather than to the basic capacity for cell-cell adhesion. As to expression, expressed in cerebellum, heart, liver, small intestine, kidney and placenta (at protein level).

Its subcellular location is the cytoplasm. The protein localises to the cytoskeleton. It localises to the cell junction. The protein resides in the adherens junction. It is found in the cell membrane. Its subcellular location is the nucleus. Associates with the cytoplasmic domain of a variety of cadherins. The association of catenins to cadherins produces a complex which is linked to the actin filament network, and which seems to be of primary importance for cadherins cell-adhesion properties. Can associate with both E- and N-cadherins. Originally believed to be a stable component of E-cadherin/catenin adhesion complexes and to mediate the linkage of cadherins to the actin cytoskeleton at adherens junctions. In contrast, cortical actin was found to be much more dynamic than E-cadherin/catenin complexes and CTNNA1 was shown not to bind to F-actin when assembled in the complex suggesting a different linkage between actin and adherens junctions components. The homodimeric form may regulate actin filament assembly and inhibit actin branching by competing with the Arp2/3 complex for binding to actin filaments. Involved in the regulation of WWTR1/TAZ, YAP1 and TGFB1-dependent SMAD2 and SMAD3 nuclear accumulation. May play a crucial role in cell differentiation. In Mus musculus (Mouse), this protein is Catenin alpha-1.